A 179-amino-acid polypeptide reads, in one-letter code: ADP-ribosylation factor-like protein 5A (179 aa).

The N-myristoyl glycine moiety is linked to residue G2. Residues G23–T30, D66–Q70, N125–D128, and A159 each bind GTP.

Belongs to the small GTPase superfamily. Arf family.

Lacks ADP-ribosylation enhancing activity. In Mus musculus (Mouse), this protein is ADP-ribosylation factor-like protein 5A (Arl5a).